A 483-amino-acid chain; its full sequence is MAPPTRIGLAGLAVMGQNLALNIAEKGFPISVYNRTTSKVDETVERAKQEGNLPLYGFHDPESFVNSIQKPRVIIMLVKAGAPVDATIKTLSAYLEKGDCIIDGGNEWYENTERREKAMEEKGLLYLGMGVSGGEEGARNGPSMMPGGSFDAYKNIEDILTKVAAQVDSGPCVTYIGKGGSGNFVKMIHNGIEYGDMQLIAEAYDVLKSVGKLSNEELKEVFAEWNRGELLSFLIEITADIFGIKDDKGEGYLVDKVLDKTGMKGTGKWTVQQAAELSVAAPTIASSLDSRFLSGLKDERVEAAKVFKAGGVEDTLSDQVVDKKKLIDDVRQALYAAKICSYAQGMNLIRAKSVEKEWDLKLGELARIWKGGCIIRAMFLDRIKKAYDRNPNLSNLLIDPEFSKEMIERQSAWRRVVCLAIGAGISTPGMSSSLAYFDSYRRERLPANLVQAQRDYFGAHTYERIDIPGAFHTEWFKLAKSKI.

NADP(+) is bound by residues 11 to 16 (GLAVMG), 34 to 36 (NRT), 78 to 80 (VKA), and N106. Residues N106 and 132–134 (SGG) contribute to the substrate site. K186 serves as the catalytic Proton acceptor. 189–190 (HN) contacts substrate. Residue E193 is the Proton donor of the active site. Positions 194, 264, 291, 454, and 460 each coordinate substrate.

It belongs to the 6-phosphogluconate dehydrogenase family. In terms of assembly, homodimer.

It is found in the cytoplasm. The enzyme catalyses 6-phospho-D-gluconate + NADP(+) = D-ribulose 5-phosphate + CO2 + NADPH. It participates in carbohydrate degradation; pentose phosphate pathway; D-ribulose 5-phosphate from D-glucose 6-phosphate (oxidative stage): step 3/3. In terms of biological role, catalyzes the oxidative decarboxylation of 6-phosphogluconate to ribulose 5-phosphate and CO(2), with concomitant reduction of NADP to NADPH. This Spinacia oleracea (Spinach) protein is 6-phosphogluconate dehydrogenase, decarboxylating 1 (pgdC).